The chain runs to 362 residues: Homoisocitrate dehydrogenase (362 aa).

Valine 79–serine 81 contributes to the NADH binding site. Serine 81 is a binding site for (2R,3S)-homoisocitrate. Residues serine 81 and serine 91 each carry the phosphoserine modification. Residues arginine 97, arginine 107, arginine 126, tyrosine 133, lysine 196, and asparagine 198 each contribute to the (2R,3S)-homoisocitrate site. Residue asparagine 198 participates in NADH binding. Residues aspartate 232, aspartate 256, and aspartate 260 each contribute to the Mg(2+) site. NADH contacts are provided by residues glycine 289–aspartate 293 and asparagine 301.

The protein belongs to the isocitrate and isopropylmalate dehydrogenases family. The cofactor is Mg(2+).

The protein resides in the cytoplasm. The enzyme catalyses (2R,3S)-homoisocitrate + NAD(+) = 2-oxoadipate + CO2 + NADH. It functions in the pathway amino-acid biosynthesis; L-lysine biosynthesis via AAA pathway; L-alpha-aminoadipate from 2-oxoglutarate: step 4/5. In Schizosaccharomyces pombe (strain 972 / ATCC 24843) (Fission yeast), this protein is Homoisocitrate dehydrogenase (lys12).